A 520-amino-acid chain; its full sequence is Cobyric acid synthase (520 aa).

The 212-residue stretch at 254–465 folds into the GATase cobBQ-type domain; it reads ELDIAVVRLP…IHGILDNDGL (212 aa). Residue Cys-335 is the Nucleophile of the active site. His-457 is a catalytic residue.

It belongs to the CobB/CobQ family. CobQ subfamily.

The protein operates within cofactor biosynthesis; adenosylcobalamin biosynthesis. In terms of biological role, catalyzes amidations at positions B, D, E, and G on adenosylcobyrinic A,C-diamide. NH(2) groups are provided by glutamine, and one molecule of ATP is hydrogenolyzed for each amidation. In Sorangium cellulosum (strain So ce56) (Polyangium cellulosum (strain So ce56)), this protein is Cobyric acid synthase.